Here is a 227-residue protein sequence, read N- to C-terminus: Orotidine 5'-phosphate decarboxylase (227 aa).

Residues Asp-8, Lys-30, 59 to 68, Thr-118, Arg-178, Gln-187, Gly-207, and Arg-208 contribute to the substrate site; that span reads DLKLYDIPYT. The Proton donor role is filled by Lys-61.

This sequence belongs to the OMP decarboxylase family. Type 1 subfamily. In terms of assembly, homodimer.

It carries out the reaction orotidine 5'-phosphate + H(+) = UMP + CO2. Its pathway is pyrimidine metabolism; UMP biosynthesis via de novo pathway; UMP from orotate: step 2/2. Catalyzes the decarboxylation of orotidine 5'-monophosphate (OMP) to uridine 5'-monophosphate (UMP). This Helicobacter pylori (strain J99 / ATCC 700824) (Campylobacter pylori J99) protein is Orotidine 5'-phosphate decarboxylase.